A 318-amino-acid polypeptide reads, in one-letter code: MNTDNRYHWPHKDLLDVTQLSRADTLHLLDLAASFQEINSRPVKKVPTLKGKTVVLFFVENSTRTKTSFDVAGKRLSADTFALGKSGSSLNKGESLKDTALTLQAMSPDVIVMRHSSSGAARYVADLLPCGVVNGGDGWHAHPTQALLDCFSLREAWANSFEGRTLLILGDIAHSRVARSNIHLLTSLGVRIRVCAPRTLLPAGVDHWPVEVYTDLRQAVRDVDAVMCLRLQLERQQAGLLPDLAEYSRRFCLGLEHMALARPGAGVLHPGPMNRGLEISDDMADAPASLVLDQVAAGVATRMAVLYLLATRNDGGRA.

Carbamoyl phosphate is bound by residues Arg64 and Thr65. Lys92 contacts L-aspartate. Residues Arg114, His142, and Gln145 each contribute to the carbamoyl phosphate site. 2 residues coordinate L-aspartate: Arg176 and Arg230. Carbamoyl phosphate-binding residues include Gly271 and Pro272.

It belongs to the aspartate/ornithine carbamoyltransferase superfamily. ATCase family. Heterododecamer (2C3:3R2) of six catalytic PyrB chains organized as two trimers (C3), and six regulatory PyrI chains organized as three dimers (R2).

It catalyses the reaction carbamoyl phosphate + L-aspartate = N-carbamoyl-L-aspartate + phosphate + H(+). It functions in the pathway pyrimidine metabolism; UMP biosynthesis via de novo pathway; (S)-dihydroorotate from bicarbonate: step 2/3. Its function is as follows. Catalyzes the condensation of carbamoyl phosphate and aspartate to form carbamoyl aspartate and inorganic phosphate, the committed step in the de novo pyrimidine nucleotide biosynthesis pathway. The protein is Aspartate carbamoyltransferase catalytic subunit of Desulfovibrio desulfuricans (strain ATCC 27774 / DSM 6949 / MB).